We begin with the raw amino-acid sequence, 142 residues long: Large ribosomal subunit protein bL27m (142 aa).

The tract at residues 27 to 48 (TKKSAGSTKNGRTSQPKNLGLK) is disordered. The segment covering 30 to 43 (SAGSTKNGRTSQPK) has biased composition (polar residues).

The protein belongs to the bacterial ribosomal protein bL27 family.

Its subcellular location is the mitochondrion. This is Large ribosomal subunit protein bL27m (mrpl27) from Dictyostelium discoideum (Social amoeba).